The primary structure comprises 221 residues: Transcription factor MYB1 (221 aa).

2 consecutive HTH myb-type domains span residues 1-57 (MESV…LNYL) and 58-112 (RPNI…QKKL). 2 DNA-binding regions (H-T-H motif) span residues 33 to 57 (WHQVPLRSGLNRCRKSCRMRWLNYL) and 85 to 108 (WSLIAGRLPGRTSNDVKNYWNTHL). The disordered stretch occupies residues 126 to 154 (KTIVPKGTEAQPRAHPKSPPRPSPPSNNE).

In terms of tissue distribution, expressed in stems and leaves. Expressed at low levels in ovaries.

The protein localises to the nucleus. Functionally, transcription activator involved in the regulation of anthocyanin biosynthesis in red-fleshed kiwifruit varieties. Activates the transcription of genes involved in anthocyanin biosynthesis, such as dihydroflavonol reductase (DFR), anthocyanidin synthase (ANS) and UDP flavonoid glycosyltransferase (UFGT). This is Transcription factor MYB1 from Actinidia chinensis var. chinensis (Chinese soft-hair kiwi).